Reading from the N-terminus, the 119-residue chain is Protein TusC (119 aa).

This sequence belongs to the DsrF/TusC family. In terms of assembly, heterohexamer, formed by a dimer of trimers. The hexameric TusBCD complex contains 2 copies each of TusB, TusC and TusD. The TusBCD complex interacts with TusE.

Its subcellular location is the cytoplasm. In terms of biological role, part of a sulfur-relay system required for 2-thiolation of 5-methylaminomethyl-2-thiouridine (mnm(5)s(2)U) at tRNA wobble positions. The protein is Protein TusC of Escherichia coli O157:H7.